The chain runs to 667 residues: Threonine--tRNA ligase (667 aa).

In terms of domain architecture, TGS spans 3 to 64; it reads DMIRVTLPDG…EEDTNLALVT (62 aa). The segment at 252-561 is catalytic; sequence DHRRLGQEMD…LIEHFVGRFP (310 aa). Cysteine 357, histidine 408, and histidine 538 together coordinate Zn(2+).

It belongs to the class-II aminoacyl-tRNA synthetase family. As to quaternary structure, homodimer. The cofactor is Zn(2+).

The protein resides in the cytoplasm. It catalyses the reaction tRNA(Thr) + L-threonine + ATP = L-threonyl-tRNA(Thr) + AMP + diphosphate + H(+). Its function is as follows. Catalyzes the attachment of threonine to tRNA(Thr) in a two-step reaction: L-threonine is first activated by ATP to form Thr-AMP and then transferred to the acceptor end of tRNA(Thr). Also edits incorrectly charged L-seryl-tRNA(Thr). This Sphingopyxis alaskensis (strain DSM 13593 / LMG 18877 / RB2256) (Sphingomonas alaskensis) protein is Threonine--tRNA ligase.